Consider the following 115-residue polypeptide: NADH-ubiquinone oxidoreductase chain 3 (115 aa).

Helical transmembrane passes span 4-24 (ALTL…AFWL), 55-75 (FFLV…LLPL), and 84-104 (LTTM…SLAY).

Belongs to the complex I subunit 3 family. Core subunit of respiratory chain NADH dehydrogenase (Complex I) which is composed of 45 different subunits. Interacts with TMEM186. Interacts with TMEM242.

It is found in the mitochondrion inner membrane. The catalysed reaction is a ubiquinone + NADH + 5 H(+)(in) = a ubiquinol + NAD(+) + 4 H(+)(out). Functionally, core subunit of the mitochondrial membrane respiratory chain NADH dehydrogenase (Complex I) which catalyzes electron transfer from NADH through the respiratory chain, using ubiquinone as an electron acceptor. Essential for the catalytic activity of complex I. The chain is NADH-ubiquinone oxidoreductase chain 3 from Phoca vitulina (Harbor seal).